The following is a 360-amino-acid chain: SUN domain-containing protein 3 (360 aa).

A compositionally biased stretch (polar residues) spans Met-1–Ser-10. The segment at Met-1–Ala-39 is disordered. At Met-1–Lys-47 the chain is on the nuclear side. A helical membrane pass occupies residues Ala-48–Met-67. Over Lys-68 to Ser-360 the chain is Perinuclear space. The stretch at Lys-103–Asp-142 forms a coiled coil. The SUN domain occupies Gly-196–Lys-357.

Self-associates. Interacts with SYNE1 and SPAG4/SUN4. Proposed to form a spermatogenesis-specific LINC complex with SYNE1 during sperm head formation possibly implicating a SUN domain-based heterotrimer with SPAG4/SUN4 associating with SYNE1.

The protein resides in the membrane. The protein localises to the nucleus envelope. It is found in the nucleus inner membrane. Its function is as follows. As a probable component of the LINC (LInker of Nucleoskeleton and Cytoskeleton) complex, involved in the connection between the nuclear lamina and the cytoskeleton. The nucleocytoplasmic interactions established by the LINC complex play an important role in the transmission of mechanical forces across the nuclear envelope and in nuclear movement and positioning. May be involved in nuclear remodeling during sperm head formation in spermatogenesis. A probable SUN3:SYNE1 LINC complex may tether spermatid nuclei to posterior cytoskeletal structures such as the manchette. In Bos taurus (Bovine), this protein is SUN domain-containing protein 3 (SUN3).